A 524-amino-acid polypeptide reads, in one-letter code: Protein tweety homolog 3 (524 aa).

Residues 1 to 42 (MAGVSYAAPWWVSLLHRLPHFDLRWEATSSQFRPEDADYQQA) lie on the Extracellular side of the membrane. A helical membrane pass occupies residues 43–63 (LLLLGATALACLALDLLFLLF). At 64-86 (YSFWLCCRRRKTDEHLDADCCCT) the chain is on the cytoplasmic side. The helical transmembrane segment at 87-107 (AWCVIITTLVCSAGIAVGFYG) threads the bilayer. Over 108-211 (NGETSDGIHR…VDLYDWYRWL (104 aa)) the chain is Extracellular. Residues E110 and D113 each contribute to the Ca(2+) site. N-linked (GlcNAc...) asparagine glycans are attached at residues N126 and N144. The chain crosses the membrane as a helical span at residues 212–232 (GYLGLLLLDVIICLLVLVGLI). At 233-236 (RSSK) the chain is on the cytoplasmic side. Residues 237-257 (GILVGVCLLGVLALVISWGAL) form a helical membrane-spanning segment. Over 258-386 (GLELAVSVGS…LTGFCYDGVE (129 aa)) the chain is Extracellular. 2 cysteine pairs are disulfide-bonded: C271–C381 and C299–C366. Residue N351 is glycosylated (N-linked (GlcNAc...) asparagine). The chain crosses the membrane as a helical span at residues 387–407 (GLIYLALFSFVTALMFSSIVC). Over 408 to 524 (SIPHTWQQKR…PRPDSSGSGH (117 aa)) the chain is Cytoplasmic. Disordered regions lie at residues 413–435 (WQQK…RQAH) and 485–524 (RCEN…GSGH). At S496 the chain carries Phosphoserine. The PY-motif; mediates interaction with NEDD4L signature appears at 498–501 (PPSY). The segment covering 501–524 (YTSSMRAKYLATSQPRPDSSGSGH) has biased composition (polar residues). Phosphoserine is present on residues S504 and S522.

The protein belongs to the tweety family. In terms of assembly, homotetramer; disulfide-linked. Forms cis-homodimers in the presence of Ca(2+). Interacts with NEDD4L. Post-translationally, ubiquitinated by NEDD4L. N-glycosylated. As to expression, expressed in excitable tissues. Expressed in the brain, heart, skeletal muscle, colon, spleen, kidney and peripheral blood leukocytes. Also expressed in fat, the pancreas, thymus, and uterus.

The protein localises to the cell membrane. It carries out the reaction chloride(in) = chloride(out). The catalysed reaction is L-glutamate(out) = L-glutamate(in). With respect to regulation, inhibited by (4-[(2-butyl-6,7-dichloro-2- cyclopentyl-2,3-dihydro-1-oxo-1H-inden-5-yl)oxy]butanoic acid), genistein and PD98059 (MEK1 inhibitor). In terms of biological role, calcium-independent, swelling-dependent volume-regulated anion channel (VRAC-swell) which plays a pivotal role in the process of regulatory volume decrease (RVD) in the brain through the efflux of anions like chloride and organic osmolytes like glutamate. Probable large-conductance Ca(2+)-activated chloride channel. In Mus musculus (Mouse), this protein is Protein tweety homolog 3 (Ttyh3).